Consider the following 265-residue polypeptide: Mlc titration factor A (265 aa).

Zn(2+) is bound by residues His111, His148, His152, and Glu211.

It belongs to the MtfA family. Interacts with Mlc. Requires Zn(2+) as cofactor.

It is found in the cytoplasm. Involved in the modulation of the activity of the glucose-phosphotransferase system (glucose-PTS). Interacts with the transcriptional repressor Mlc, preventing its interaction with DNA and leading to the modulation of expression of genes regulated by Mlc, including ptsG, which encodes the PTS system glucose-specific EIICB component. Functionally, shows zinc-dependent metallopeptidase activity. The sequence is that of Mlc titration factor A from Escherichia coli O8 (strain IAI1).